The primary structure comprises 124 residues: MKKLFTVVGSIFSGLGIWLKSIDQSFYLTKVLYNGKVIEIVLTPETNEVVKSSNGVMNASVTSLPSTILYQAQSVPSINGGTLSVINTTVQPPWYANLWPEVLTIGIVMLGIAIFSWIKLKFRR.

Functionally, this protein may be involved in virus assembly. This is an uncharacterized protein from Sulfolobus spindle-shape virus 1 (SSV1).